We begin with the raw amino-acid sequence, 287 residues long: 4-hydroxybenzoate octaprenyltransferase (287 aa).

A run of 8 helical transmembrane segments spans residues 21 to 39, 95 to 115, 116 to 136, 138 to 158, 161 to 181, 213 to 233, 234 to 251, and 264 to 284; these read PIGT…WLAA, VLAL…TMNP, LTIG…FMKR, IPIP…MAYA, ANAL…WTIA, IIGA…QLSE, LGSS…LFVY, and CFQA…GVVI.

It belongs to the UbiA prenyltransferase family. The cofactor is Mg(2+).

Its subcellular location is the cell inner membrane. It catalyses the reaction all-trans-octaprenyl diphosphate + 4-hydroxybenzoate = 4-hydroxy-3-(all-trans-octaprenyl)benzoate + diphosphate. It participates in cofactor biosynthesis; ubiquinone biosynthesis. Catalyzes the prenylation of para-hydroxybenzoate (PHB) with an all-trans polyprenyl group. Mediates the second step in the final reaction sequence of ubiquinone-8 (UQ-8) biosynthesis, which is the condensation of the polyisoprenoid side chain with PHB, generating the first membrane-bound Q intermediate 3-octaprenyl-4-hydroxybenzoate. This is 4-hydroxybenzoate octaprenyltransferase from Aeromonas hydrophila subsp. hydrophila (strain ATCC 7966 / DSM 30187 / BCRC 13018 / CCUG 14551 / JCM 1027 / KCTC 2358 / NCIMB 9240 / NCTC 8049).